An 87-amino-acid chain; its full sequence is CRISPR-associated endoribonuclease Cas2 (87 aa).

Mg(2+) is bound at residue Asp-8.

Belongs to the CRISPR-associated endoribonuclease Cas2 protein family. As to quaternary structure, homodimer, forms a heterotetramer with a Cas1 homodimer. It depends on Mg(2+) as a cofactor.

Its function is as follows. CRISPR (clustered regularly interspaced short palindromic repeat), is an adaptive immune system that provides protection against mobile genetic elements (viruses, transposable elements and conjugative plasmids). CRISPR clusters contain sequences complementary to antecedent mobile elements and target invading nucleic acids. CRISPR clusters are transcribed and processed into CRISPR RNA (crRNA). Functions as a ssRNA-specific endoribonuclease. Involved in the integration of spacer DNA into the CRISPR cassette. This Methanosarcina acetivorans (strain ATCC 35395 / DSM 2834 / JCM 12185 / C2A) protein is CRISPR-associated endoribonuclease Cas2.